Reading from the N-terminus, the 1009-residue chain is Glutamate receptor ionotropic, delta-2 (1009 aa).

The N-terminal stretch at methionine 1–proline 23 is a signal peptide. Topologically, residues aspartate 24 to aspartate 566 are extracellular. 4 N-linked (GlcNAc...) asparagine glycosylation sites follow: asparagine 293, asparagine 306, asparagine 390, and asparagine 426. Ca(2+) contacts are provided by glutamate 531, valine 534, and aspartate 535. A helical transmembrane segment spans residues leucine 567–leucine 587. At asparagine 588–glycine 635 the chain is on the cytoplasmic side. Residues valine 636–leucine 656 form a helical membrane-spanning segment. At threonine 657–serine 830 the chain is on the extracellular side. Asparagine 713 carries an N-linked (GlcNAc...) asparagine glycan. The Ca(2+) site is built by aspartate 753, aspartate 755, and serine 757. Residues phenylalanine 831–valine 851 traverse the membrane as a helical segment. At glutamate 852–isoleucine 1009 the chain is on the cytoplasmic side. Positions tyrosine 989–isoleucine 1009 are disordered.

The protein belongs to the glutamate-gated ion channel (TC 1.A.10.1) family. GRID2 subfamily. In terms of assembly, tetramer; dimer of dimers. As to expression, expressed in cerebellar Purkinje cells, in crest cells in the medial octavolateral nucleus and in type I neurons of the optic tectum.

Its subcellular location is the postsynaptic cell membrane. It carries out the reaction Ca(2+)(in) = Ca(2+)(out). The catalysed reaction is Na(+)(in) = Na(+)(out). Its function is as follows. Member of the ionotropic glutamate receptor family, which plays a crucial role in synaptic organization and signal transduction in the central nervous system. Although it shares structural features with ionotropic glutamate receptors, does not bind glutamate as a primary ligand. Promotes synaptogenesis and mediates the D-Serine-dependent long term depression signals and AMPA receptor endocytosis of cerebellar parallel fiber-Purkinje cell (PF-PC) synapses through the NRX1B-CBLN1-GRID2 triad complex. In the presence of neurexins and cerebellins, forms cation-selective channels that are proposed to be gated by glycine and D-serine. However, recent research disputes this ligand-gated cation channel activity. Cation-selective ion channel activity can be triggered by GRM1 in Purkinje cells. The polypeptide is Glutamate receptor ionotropic, delta-2 (Danio rerio (Zebrafish)).